The following is an 865-amino-acid chain: Leucine--tRNA ligase (865 aa).

The 'HIGH' region motif lies at 48–58 (PYPSGQLHVGH). A 'KMSKS' region motif is present at residues 626–630 (KMSKS). Lys629 serves as a coordination point for ATP.

The protein belongs to the class-I aminoacyl-tRNA synthetase family.

The protein resides in the cytoplasm. It catalyses the reaction tRNA(Leu) + L-leucine + ATP = L-leucyl-tRNA(Leu) + AMP + diphosphate. This is Leucine--tRNA ligase from Gluconobacter oxydans (strain 621H) (Gluconobacter suboxydans).